Here is a 292-residue protein sequence, read N- to C-terminus: 4-hydroxy-tetrahydrodipicolinate synthase (292 aa).

T45 provides a ligand contact to pyruvate. The Proton donor/acceptor role is filled by Y133. The Schiff-base intermediate with substrate role is filled by K161. I203 is a pyruvate binding site.

Belongs to the DapA family. In terms of assembly, homotetramer; dimer of dimers.

The protein localises to the cytoplasm. It catalyses the reaction L-aspartate 4-semialdehyde + pyruvate = (2S,4S)-4-hydroxy-2,3,4,5-tetrahydrodipicolinate + H2O + H(+). Its pathway is amino-acid biosynthesis; L-lysine biosynthesis via DAP pathway; (S)-tetrahydrodipicolinate from L-aspartate: step 3/4. Its function is as follows. Catalyzes the condensation of (S)-aspartate-beta-semialdehyde [(S)-ASA] and pyruvate to 4-hydroxy-tetrahydrodipicolinate (HTPA). The protein is 4-hydroxy-tetrahydrodipicolinate synthase of Salmonella paratyphi A (strain AKU_12601).